Consider the following 1075-residue polypeptide: Error-prone DNA polymerase (1075 aa).

The protein belongs to the DNA polymerase type-C family. DnaE2 subfamily.

The protein resides in the cytoplasm. The enzyme catalyses DNA(n) + a 2'-deoxyribonucleoside 5'-triphosphate = DNA(n+1) + diphosphate. In terms of biological role, DNA polymerase involved in damage-induced mutagenesis and translesion synthesis (TLS). It is not the major replicative DNA polymerase. The sequence is that of Error-prone DNA polymerase from Ralstonia nicotianae (strain ATCC BAA-1114 / GMI1000) (Ralstonia solanacearum).